Consider the following 483-residue polypeptide: Adenylyltransferase and sulfurtransferase uba4 (483 aa).

ATP is bound by residues glycine 100, aspartate 121, serine 128–arginine 132, lysine 145, and aspartate 178–asparagine 179. Zn(2+) is bound by residues cysteine 227 and cysteine 230. The active-site Glycyl thioester intermediate; for adenylyltransferase activity is cysteine 244. Zn(2+) is bound by residues cysteine 306 and cysteine 309. Residues isoleucine 366–proline 481 enclose the Rhodanese domain. The Cysteine persulfide intermediate; for sulfurtransferase activity role is filled by cysteine 436.

It in the N-terminal section; belongs to the HesA/MoeB/ThiF family. UBA4 subfamily. Requires Zn(2+) as cofactor.

It is found in the cytoplasm. The protein localises to the cytosol. It carries out the reaction [molybdopterin-synthase sulfur-carrier protein]-C-terminal Gly-Gly + ATP + H(+) = [molybdopterin-synthase sulfur-carrier protein]-C-terminal Gly-Gly-AMP + diphosphate. The catalysed reaction is [molybdopterin-synthase sulfur-carrier protein]-C-terminal Gly-Gly-AMP + S-sulfanyl-L-cysteinyl-[cysteine desulfurase] + AH2 = [molybdopterin-synthase sulfur-carrier protein]-C-terminal-Gly-aminoethanethioate + L-cysteinyl-[cysteine desulfurase] + A + AMP + 2 H(+). Its pathway is tRNA modification; 5-methoxycarbonylmethyl-2-thiouridine-tRNA biosynthesis. Plays a central role in 2-thiolation of mcm(5)S(2)U at tRNA wobble positions of cytosolic tRNA(Lys), tRNA(Glu) and tRNA(Gln). Also essential during biosynthesis of the molybdenum cofactor. Acts by mediating the C-terminal thiocarboxylation of sulfur carriers urm1 and mocs2a. Its N-terminus first activates urm1 and mocs2a as acyl-adenylates (-COAMP), then the persulfide sulfur on the catalytic cysteine is transferred to urm1 and mocs2a to form thiocarboxylation (-COSH) of their C-terminus. The reaction probably involves hydrogen sulfide that is generated from the persulfide intermediate and that acts as a nucleophile towards urm1 and mocs2a. Subsequently, a transient disulfide bond is formed. Does not use thiosulfate as sulfur donor; nfs1 probably acting as a sulfur donor for thiocarboxylation reactions. The sequence is that of Adenylyltransferase and sulfurtransferase uba4 from Neosartorya fischeri (strain ATCC 1020 / DSM 3700 / CBS 544.65 / FGSC A1164 / JCM 1740 / NRRL 181 / WB 181) (Aspergillus fischerianus).